Reading from the N-terminus, the 171-residue chain is Plastocyanin minor isoform, chloroplastic (171 aa).

Residues 73 to 171 form the Plastocyanin-like domain; the sequence is MEVLLGSDDG…AGMVGKLTVK (99 aa). 4 residues coordinate Cu cation: His109, Cys156, His159, and Met164.

Belongs to the plastocyanin family. The cofactor is Cu(2+).

It localises to the plastid. Its subcellular location is the chloroplast thylakoid membrane. Participates in electron transfer between P700 and the cytochrome b6-f complex in photosystem I. Seems to be a minor plastocyanin in Arabidopsis. The sequence is that of Plastocyanin minor isoform, chloroplastic (PETE) from Arabidopsis thaliana (Mouse-ear cress).